A 134-amino-acid chain; its full sequence is ATP synthase epsilon chain (134 aa).

The protein belongs to the ATPase epsilon chain family. F-type ATPases have 2 components, CF(1) - the catalytic core - and CF(0) - the membrane proton channel. CF(1) has five subunits: alpha(3), beta(3), gamma(1), delta(1), epsilon(1). CF(0) has three main subunits: a, b and c.

The protein resides in the cell membrane. Its function is as follows. Produces ATP from ADP in the presence of a proton gradient across the membrane. The chain is ATP synthase epsilon chain from Ruminococcus albus (strain ATCC 27210 / DSM 20455 / JCM 14654 / NCDO 2250 / 7).